Here is a 711-residue protein sequence, read N- to C-terminus: Ribosomal RNA large subunit methyltransferase K/L (711 aa).

The THUMP domain maps to 43-154 (TLYRTLLWSR…RENLVISLDL (112 aa)).

Belongs to the methyltransferase superfamily. RlmKL family.

The protein resides in the cytoplasm. The enzyme catalyses guanosine(2445) in 23S rRNA + S-adenosyl-L-methionine = N(2)-methylguanosine(2445) in 23S rRNA + S-adenosyl-L-homocysteine + H(+). The catalysed reaction is guanosine(2069) in 23S rRNA + S-adenosyl-L-methionine = N(2)-methylguanosine(2069) in 23S rRNA + S-adenosyl-L-homocysteine + H(+). Functionally, specifically methylates the guanine in position 2445 (m2G2445) and the guanine in position 2069 (m7G2069) of 23S rRNA. The sequence is that of Ribosomal RNA large subunit methyltransferase K/L from Haemophilus influenzae (strain ATCC 51907 / DSM 11121 / KW20 / Rd).